The following is a 185-amino-acid chain: TATA-box-binding protein (185 aa).

Tandem repeats lie at residues 3-78 (IQNI…REDL) and 94-176 (IQNI…AEKI).

The protein belongs to the TBP family.

In terms of biological role, general factor that plays a role in the activation of archaeal genes transcribed by RNA polymerase. Binds specifically to the TATA box promoter element which lies close to the position of transcription initiation. The sequence is that of TATA-box-binding protein from Methanopyrus kandleri (strain AV19 / DSM 6324 / JCM 9639 / NBRC 100938).